Here is a 158-residue protein sequence, read N- to C-terminus: Class 10 plant pathogenesis-related protein 2D (158 aa).

D8 is a trans-zeatin binding site. Ca(2+) is bound by residues P32, V35, and I38. E60, H69, Y81, and Y83 together coordinate trans-zeatin.

The protein belongs to the BetVI family.

It localises to the cytoplasm. The protein resides in the cytosol. Its function is as follows. Class II ribonuclease (RNase). Binds to cytokinins. Interacts with melatonin. This is Class 10 plant pathogenesis-related protein 2D from Lupinus luteus (European yellow lupine).